The chain runs to 1966 residues: Histone-lysine N-methyltransferase SETD1B (1966 aa).

Basic residues predominate over residues 1–12; that stretch reads MENSHPPHHHHQ. The interval 1-26 is disordered; that stretch reads MENSHPPHHHHQQPPPQPGPSGERRN. Positions 68–98 are interaction with WDR82; it reads VEDPRVVGIWTKNKELELSVPKFKIDEFYVG. Positions 93 to 181 constitute an RRM domain; the sequence is DEFYVGPVPP…NIIHVELDTK (89 aa). 7 disordered regions span residues 235 to 302, 357 to 660, 675 to 719, 963 to 1462, 1501 to 1541, 1555 to 1606, and 1636 to 1668; these read GCGS…LFSQ, VGGT…PKPM, LAPT…PPPA, KVKR…SGPL, PPLL…RPPA, QPQT…KLPF, and AKSRGPWRRPPKKRHEDLVPPAGSPELSPPQPL. Composition is skewed to polar residues over residues 243–259, 265–274, and 282–300; these read VTPNSGGTPFSQDTAYS, TPNSYGQGTP, and PFSQDSSYSSRQPTPSYLF. 2 stretches are compositionally biased toward pro residues: residues 432–441 and 449–458; these read PAPPPLPPAE and GTPPGPPPPD. A compositionally biased stretch (basic and acidic residues) spans 493 to 521; it reads EKPHDSLDSRIEMLLKEQRTKLLFLREPD. Low complexity predominate over residues 531–543; that stretch reads SPISSSSSQLSPL. Pro residues predominate over residues 592–603; sequence PRPPPEPGPPDP. Residues 637–646 show a composition bias toward acidic residues; sequence EDMEISDDEM. Positions 679–719 are enriched in pro residues; the sequence is LPLPPPPGFPPLPPPPPPPPPQPGFPMPPPLPPPPPPPPPA. Ser-986 and Ser-994 each carry phosphoserine. Residues 995–1015 are compositionally biased toward basic and acidic residues; it reads ERERDRDMADTPCELAKRDPK. Ser-1031 bears the Phosphoserine mark. Residues 1041-1064 are compositionally biased toward low complexity; that stretch reads LSASSSSSASSSSGSSTTSPSSSA. Acidic residues-rich tracts occupy residues 1067–1087 and 1104–1142; these read KEEEQESTEEEEEAEEEEEEE and KDDDDDDSDDRDESENDDEDTALSEASEKDEGDSDEEET. Residues 1148 to 1174 show a composition bias toward low complexity; it reads SKAEATSSSESSESSEFESSSESSPSS. Residues 1173 to 1204 adopt a coiled-coil conformation; the sequence is SSSEDEEEVVAREEEEEEEEEEMVAEESMASA. Composition is skewed to acidic residues over residues 1175–1197 and 1229–1238; these read SEDEEEVVAREEEEEEEEEEMVA and GMEEEVDIET. A phosphoserine mark is found at Ser-1265, Ser-1283, and Ser-1335. The span at 1312–1340 shows a compositional bias: pro residues; that stretch reads EPPMMLPLPLQPPLPPPRPPRPPSPPPEP. Over residues 1383–1425 the composition is skewed to low complexity; it reads PGGEPPLSGGSSGLSLSSPQVPGSPFSYPAPSPSLSSGGLPRT. Pro residues predominate over residues 1501–1514; that stretch reads PPLLPAPLASCPPP. Basic residues predominate over residues 1515-1524; it reads MKRKPGRPRR. Over residues 1580–1600 the composition is skewed to pro residues; the sequence is PAPPPPLPPQPPPPPPPPPVE. Residues Ser-1659 and Ser-1663 each carry the phosphoserine modification. Positions 1745-1750 match the WDR5 interaction motif (WIN) motif; the sequence is GCARSE. The tract at residues 1767–1800 is disordered; the sequence is SRASTDEPPADTQGMSIPAQPHASTRAGSERRSE. A RxxxRR motif motif is present at residues 1798–1803; the sequence is RSEQRR. Positions 1827-1944 constitute an SET domain; sequence KKLKFCKSHI…VNEEITYDYK (118 aa). Tyr-1943 is an S-adenosyl-L-methionine binding site. Residues 1950–1966 form the Post-SET domain; that stretch reads VKIPCLCGSENCRGTLN.

The protein belongs to the class V-like SAM-binding methyltransferase superfamily. In terms of assembly, component of the SET1B/COMPASS complex composed of the catalytic subunit SETD1B, WDR5, WDR82, RBBP5, ASH2L/ASH2, CXXC1/CFP1, HCFC1, DPY30 homotrimer and BOD1. Forms a core complex with the evolutionary conserved subcomplex WRAD composed of WDR5, RBBP5, ASH2L/ASH2 and DPY30 subunits; WRAD differentially stimulates the methyltransferase activity. Interacts with HCFC1 and ASH2L/ASH2. Interacts (via N-terminal region) with WDR82. Interacts (via the RRM domain) with hyperphosphorylated C-terminal domain (CTD) of RNA polymerase II large subunit (POLR2A) only in the presence of WDR82. Binds specifically to CTD heptad repeats phosphorylated on 'Ser-5' of each heptad. Interacts with RBM15. Interacts (via WIN motif) with WDR5.

The protein resides in the nucleus. It is found in the nucleus speckle. It localises to the chromosome. The protein localises to the cytoplasm. The catalysed reaction is L-lysyl(4)-[histone H3] + S-adenosyl-L-methionine = N(6)-methyl-L-lysyl(4)-[histone H3] + S-adenosyl-L-homocysteine + H(+). It carries out the reaction N(6)-methyl-L-lysyl(4)-[histone H3] + S-adenosyl-L-methionine = N(6),N(6)-dimethyl-L-lysyl(4)-[histone H3] + S-adenosyl-L-homocysteine + H(+). It catalyses the reaction N(6),N(6)-dimethyl-L-lysyl(4)-[histone H3] + S-adenosyl-L-methionine = N(6),N(6),N(6)-trimethyl-L-lysyl(4)-[histone H3] + S-adenosyl-L-homocysteine + H(+). In terms of biological role, histone methyltransferase that catalyzes methyl group transfer from S-adenosyl-L-methionine to the epsilon-amino group of 'Lys-4' of histone H3 (H3K4) via a non-processive mechanism. Part of chromatin remodeling machinery, forms H3K4me1, H3K4me2 and H3K4me3 methylation marks at active chromatin sites where transcription and DNA repair take place. Plays an essential role in regulating the transcriptional programming of multipotent hematopoietic progenitor cells and lymphoid lineage specification during hematopoiesis. The sequence is that of Histone-lysine N-methyltransferase SETD1B (SETD1B) from Homo sapiens (Human).